A 256-amino-acid chain; its full sequence is MSNITMKELLEAGVHFGHQTKRWNPKMKPYIFGARNGIYIIDLQKTVRLFKGAYNFVVDAAQSGETMLFVGTKKQAQDSVSEEAQRCGMFYVNDRWLGGMLTNFSTVKQSIDRLKRLDAMVADGTIEAYTKKEALQMEKDRQKLEKTLGGIKGMNKLPGVLFVIDPKNEEIAVSEAKKLGIPVVAIVDTNCDPDDIDYVIPGNDDAIRAIRLLTSKVADAMIEGGQARNIKLQTDTEGAEFAAEAEGVVEETAGEA.

Belongs to the universal ribosomal protein uS2 family.

This chain is Small ribosomal subunit protein uS2, found in Geotalea uraniireducens (strain Rf4) (Geobacter uraniireducens).